The chain runs to 207 residues: uncharacterized protein (207 aa).

It belongs to the IIV-6 350L family.

This is an uncharacterized protein from Invertebrate iridescent virus 6 (IIV-6).